We begin with the raw amino-acid sequence, 975 residues long: Kinesin heavy chain (975 aa).

Positions 12–333 (SIKVVCRFRP…LDFGRRAKTV (322 aa)) constitute a Kinesin motor domain. 92–99 (GQTSSGKT) serves as a coordination point for ATP. Residues 180–321 (VSSPEDVFEV…PASFNESETK (142 aa)) form a microtubule-binding region. The stretch at 335–931 (NVVCVNEELT…DRIKEAVRQK (597 aa)) forms a coiled coil. A necessary for associating with milt region spans residues 810-891 (VAKELQTLHN…LPKLEKRLRC (82 aa)). Positions 932–975 (HLGRRGPQAQIAKPIRSGQGAIAIRGGGAVGGPSPLAQVNPVNS) are globular.

It belongs to the TRAFAC class myosin-kinesin ATPase superfamily. Kinesin family. Kinesin subfamily. In terms of assembly, oligomer composed of two heavy chains and two light chains.

The protein localises to the cytoplasm. It is found in the cytoskeleton. Kinesin is a microtubule-associated force-producing protein that may play a role in organelle transport. Milt and Miro form an essential protein complex that links Khc to mitochondria for light chain-independent, anterograde transport of mitochondria. The chain is Kinesin heavy chain (Khc) from Drosophila melanogaster (Fruit fly).